The following is a 517-amino-acid chain: Bifunctional purine biosynthesis protein PurH (517 aa).

The MGS-like domain maps to 1 to 146 (MAPIALLSVS…KNHAHVAVLT (146 aa)).

It belongs to the PurH family.

The enzyme catalyses (6R)-10-formyltetrahydrofolate + 5-amino-1-(5-phospho-beta-D-ribosyl)imidazole-4-carboxamide = 5-formamido-1-(5-phospho-D-ribosyl)imidazole-4-carboxamide + (6S)-5,6,7,8-tetrahydrofolate. It catalyses the reaction IMP + H2O = 5-formamido-1-(5-phospho-D-ribosyl)imidazole-4-carboxamide. Its pathway is purine metabolism; IMP biosynthesis via de novo pathway; 5-formamido-1-(5-phospho-D-ribosyl)imidazole-4-carboxamide from 5-amino-1-(5-phospho-D-ribosyl)imidazole-4-carboxamide (10-formyl THF route): step 1/1. The protein operates within purine metabolism; IMP biosynthesis via de novo pathway; IMP from 5-formamido-1-(5-phospho-D-ribosyl)imidazole-4-carboxamide: step 1/1. This Prochlorococcus marinus (strain MIT 9303) protein is Bifunctional purine biosynthesis protein PurH.